A 650-amino-acid polypeptide reads, in one-letter code: 1-deoxy-D-xylulose-5-phosphate synthase (650 aa).

Residues His-87 and 128 to 130 (GHS) contribute to the thiamine diphosphate site. Mg(2+) is bound at residue Asp-159. Residues 160–161 (GS), Asn-188, Tyr-299, and Glu-383 contribute to the thiamine diphosphate site. Mg(2+) is bound at residue Asn-188.

This sequence belongs to the transketolase family. DXPS subfamily. Homodimer. Requires Mg(2+) as cofactor. The cofactor is thiamine diphosphate.

The catalysed reaction is D-glyceraldehyde 3-phosphate + pyruvate + H(+) = 1-deoxy-D-xylulose 5-phosphate + CO2. The protein operates within metabolic intermediate biosynthesis; 1-deoxy-D-xylulose 5-phosphate biosynthesis; 1-deoxy-D-xylulose 5-phosphate from D-glyceraldehyde 3-phosphate and pyruvate: step 1/1. Functionally, catalyzes the acyloin condensation reaction between C atoms 2 and 3 of pyruvate and glyceraldehyde 3-phosphate to yield 1-deoxy-D-xylulose-5-phosphate (DXP). This is 1-deoxy-D-xylulose-5-phosphate synthase from Syntrophus aciditrophicus (strain SB).